The primary structure comprises 350 residues: Protein CONSERVED ONLY IN THE GREEN LINEAGE 160, chloroplastic (350 aa).

Residues 1–46 (MAILSYISATSTTPPIPQDQSPNSRLPTKIILPNKKPEKWSTGVAP) constitute a chloroplast transit peptide. Over residues 7–26 (ISATSTTPPIPQDQSPNSRL) the composition is skewed to polar residues. Residues 7–58 (ISATSTTPPIPQDQSPNSRLPTKIILPNKKPEKWSTGVAPGEYGGPPTTTKL) are disordered. A Phosphoserine modification is found at Ser117. Helical transmembrane passes span 213–233 (KNKI…SAYI), 239–259 (IALS…MLGN), 276–296 (ANQP…RWNA), and 304–324 (FMHL…IATF).

Its subcellular location is the plastid. The protein localises to the chloroplast thylakoid membrane. In terms of biological role, facilitates the assembly of the membrane proton channel of the chloroplastic F-type ATPase. Specifically required for the efficient assembly and integration of the CF(0) subunit c into the chloroplastic ATPase complex in the thylakoid membrane. The polypeptide is Protein CONSERVED ONLY IN THE GREEN LINEAGE 160, chloroplastic (Arabidopsis thaliana (Mouse-ear cress)).